The primary structure comprises 206 residues: Putative amino-acid transporter YggA (206 aa).

6 consecutive transmembrane segments (helical) span residues 1–21 (MFAT…PIGA), 37–57 (LLAA…GVFG), 65–85 (SPIG…WFGI), 116–136 (LGVT…LGSF), 148–168 (FAAG…FGAA), and 185–205 (TIVG…ALLA).

Belongs to the LysE/ArgO transporter (TC 2.A.75) family.

It is found in the cell membrane. In Aeromonas salmonicida, this protein is Putative amino-acid transporter YggA (yggA).